The chain runs to 354 residues: Uroporphyrinogen decarboxylase (354 aa).

Residues 27 to 31 (RQAGR), Asp-77, Tyr-154, Thr-209, and His-327 each bind substrate.

The protein belongs to the uroporphyrinogen decarboxylase family. Homodimer.

The protein resides in the cytoplasm. It carries out the reaction uroporphyrinogen III + 4 H(+) = coproporphyrinogen III + 4 CO2. Its pathway is porphyrin-containing compound metabolism; protoporphyrin-IX biosynthesis; coproporphyrinogen-III from 5-aminolevulinate: step 4/4. Functionally, catalyzes the decarboxylation of four acetate groups of uroporphyrinogen-III to yield coproporphyrinogen-III. In Pseudomonas putida (strain GB-1), this protein is Uroporphyrinogen decarboxylase.